The following is a 684-amino-acid chain: Frizzled-8 (684 aa).

A signal peptide spans 1 to 27 (MEWGYLLEVTSLLAALAVLQRSSGAAA). The Extracellular portion of the chain corresponds to 28 to 271 (ASAKELACQE…NPFFSQDERA (244 aa)). The FZ domain maps to 30–151 (AKELACQEIT…GNPDTLCMDY (122 aa)). Intrachain disulfides connect C35-C96, C43-C89, C80-C118, C107-C148, and C111-C135. A glycan (N-linked (GlcNAc...) asparagine) is linked at N49. 71-78 (QFWPLVEI) contacts hexadecanoate. A wnt-binding region spans residues 95–100 (ICLEDY). The segment at 147 to 152 (LCMDYN) is wnt-binding. Residue N152 is glycosylated (N-linked (GlcNAc...) asparagine). The tract at residues 155–222 (DLTTAAPSPP…KARPPGGGAA (68 aa)) is disordered. A compositionally biased stretch (pro residues) spans 161 to 175 (PSPPRRLPPPQPGEQ). Composition is skewed to low complexity over residues 176–186 (PPSGSGHSRPP) and 199–222 (GSGD…GGAA). The helical transmembrane segment at 272–292 (FTVFWIGLWSVLCFVSTFATV) threads the bilayer. The Cytoplasmic portion of the chain corresponds to 293–308 (STFLIDMERFKYPERP). The chain crosses the membrane as a helical span at residues 309 to 329 (IIFLSACYLFVSVGYLVRLVA). At 330-393 (GHEKVACSGG…RYETTGPALC (64 aa)) the chain is on the extracellular side. A helical membrane pass occupies residues 394–414 (TVVFLLVYFFGMASSIWWVIL). Residues 415-436 (SLTWFLAAGMKWGNEAIAGYSQ) are Cytoplasmic-facing. The helical transmembrane segment at 437 to 457 (YFHLAAWLVPSVKSIAVLALS) threads the bilayer. The Extracellular portion of the chain corresponds to 458 to 480 (SVDGDPVAGICYVGNQSLDNLRG). A glycan (N-linked (GlcNAc...) asparagine) is linked at N472. A helical transmembrane segment spans residues 481 to 501 (FVLAPLVIYLFIGTMFLLAGF). At 502–529 (VSLFRIRSVIKQQGGPTKTHKLEKLMIR) the chain is on the cytoplasmic side. A helical transmembrane segment spans residues 530 to 550 (LGLFTVLYTVPAAVVVACLFY). The Extracellular portion of the chain corresponds to 551-581 (EQHNRPRWEATHNCPCLRDLQPDQARRPDYA). Residues 582–602 (VFMLKYFMCLVVGITSGVWVW) traverse the membrane as a helical segment. Over 603-684 (SGKTLESWRA…YPKQMPLSQV (82 aa)) the chain is Cytoplasmic. The Lys-Thr-X-X-X-Trp motif, mediates interaction with the PDZ domain of Dvl family members motif lies at 605–610 (KTLESW). A compositionally biased stretch (gly residues) spans 630 to 654 (AGGSGPGGGGPGPGGGGGHGGGGGS). The tract at residues 630–655 (AGGSGPGGGGPGPGGGGGHGGGGGSL) is disordered. Residues 682-684 (SQV) carry the PDZ-binding motif.

The protein belongs to the G-protein coupled receptor Fz/Smo family. As to quaternary structure, component of a Wnt-signaling complex that contains a WNT protein, a FZD protein and LRP5 or LRP6. Interacts directly with LRP5 or LRP6; the interaction is promoted by Wnt-binding and signaling and inhibited by DKK1. Interacts (via the PDZ-binding motif) with GPOC (via its PDZ domain). Interacts with RSPO1 and RSPO3. Interacts with glypican GPC3. In terms of processing, ubiquitinated by ZNRF3, leading to its degradation by the proteasome.

Its subcellular location is the membrane. The protein resides in the golgi apparatus. The protein localises to the cell membrane. In terms of biological role, receptor for Wnt proteins. Component of the Wnt-Fzd-LRP5-LRP6 complex that triggers beta-catenin signaling through inducing aggregation of receptor-ligand complexes into ribosome-sized signalosomes. The beta-catenin canonical signaling pathway leads to the activation of disheveled proteins, inhibition of GSK-3 kinase, nuclear accumulation of beta-catenin and activation of Wnt target genes. A second signaling pathway involving PKC and calcium fluxes has been seen for some family members, but it is not yet clear if it represents a distinct pathway or if it can be integrated in the canonical pathway, as PKC seems to be required for Wnt-mediated inactivation of GSK-3 kinase. Both pathways seem to involve interactions with G-proteins. May be involved in transduction and intercellular transmission of polarity information during tissue morphogenesis and/or in differentiated tissues. Coreceptor along with RYK of Wnt proteins, such as WNT1. The sequence is that of Frizzled-8 (Fzd8) from Rattus norvegicus (Rat).